The chain runs to 324 residues: Fructose-1,6-bisphosphatase class 1 (324 aa).

Residues Glu88, Asp107, Leu109, and Asp110 each contribute to the Mg(2+) site. Substrate-binding positions include 110-113 (DGSS), Asn199, and Lys265. Glu271 is a binding site for Mg(2+).

Belongs to the FBPase class 1 family. In terms of assembly, homotetramer. It depends on Mg(2+) as a cofactor.

The protein localises to the cytoplasm. The enzyme catalyses beta-D-fructose 1,6-bisphosphate + H2O = beta-D-fructose 6-phosphate + phosphate. It participates in carbohydrate biosynthesis; gluconeogenesis. This Neisseria meningitidis serogroup C (strain 053442) protein is Fructose-1,6-bisphosphatase class 1.